We begin with the raw amino-acid sequence, 139 residues long: Large ribosomal subunit protein uL16 (139 aa).

The protein belongs to the universal ribosomal protein uL16 family. Part of the 50S ribosomal subunit.

Binds 23S rRNA and is also seen to make contacts with the A and possibly P site tRNAs. The polypeptide is Large ribosomal subunit protein uL16 (Chlorobium luteolum (strain DSM 273 / BCRC 81028 / 2530) (Pelodictyon luteolum)).